Here is a 272-residue protein sequence, read N- to C-terminus: Imidazole glycerol phosphate synthase subunit HisF (272 aa).

Active-site residues include aspartate 11 and aspartate 130.

The protein belongs to the HisA/HisF family. In terms of assembly, heterodimer of HisH and HisF.

The protein resides in the cytoplasm. The catalysed reaction is 5-[(5-phospho-1-deoxy-D-ribulos-1-ylimino)methylamino]-1-(5-phospho-beta-D-ribosyl)imidazole-4-carboxamide + L-glutamine = D-erythro-1-(imidazol-4-yl)glycerol 3-phosphate + 5-amino-1-(5-phospho-beta-D-ribosyl)imidazole-4-carboxamide + L-glutamate + H(+). It participates in amino-acid biosynthesis; L-histidine biosynthesis; L-histidine from 5-phospho-alpha-D-ribose 1-diphosphate: step 5/9. Functionally, IGPS catalyzes the conversion of PRFAR and glutamine to IGP, AICAR and glutamate. The HisF subunit catalyzes the cyclization activity that produces IGP and AICAR from PRFAR using the ammonia provided by the HisH subunit. The protein is Imidazole glycerol phosphate synthase subunit HisF of Methanococcus maripaludis (strain C6 / ATCC BAA-1332).